A 355-amino-acid chain; its full sequence is UDP-N-acetylglucosamine--N-acetylmuramyl-(pentapeptide) pyrophosphoryl-undecaprenol N-acetylglucosamine transferase (355 aa).

Residues 15–17 (TGG), Asn-127, Arg-163, Ser-191, Ile-244, 263–268 (ALTVSE), and Gln-288 each bind UDP-N-acetyl-alpha-D-glucosamine.

The protein belongs to the glycosyltransferase 28 family. MurG subfamily.

The protein localises to the cell inner membrane. The enzyme catalyses di-trans,octa-cis-undecaprenyl diphospho-N-acetyl-alpha-D-muramoyl-L-alanyl-D-glutamyl-meso-2,6-diaminopimeloyl-D-alanyl-D-alanine + UDP-N-acetyl-alpha-D-glucosamine = di-trans,octa-cis-undecaprenyl diphospho-[N-acetyl-alpha-D-glucosaminyl-(1-&gt;4)]-N-acetyl-alpha-D-muramoyl-L-alanyl-D-glutamyl-meso-2,6-diaminopimeloyl-D-alanyl-D-alanine + UDP + H(+). The protein operates within cell wall biogenesis; peptidoglycan biosynthesis. Functionally, cell wall formation. Catalyzes the transfer of a GlcNAc subunit on undecaprenyl-pyrophosphoryl-MurNAc-pentapeptide (lipid intermediate I) to form undecaprenyl-pyrophosphoryl-MurNAc-(pentapeptide)GlcNAc (lipid intermediate II). The protein is UDP-N-acetylglucosamine--N-acetylmuramyl-(pentapeptide) pyrophosphoryl-undecaprenol N-acetylglucosamine transferase of Salmonella dublin (strain CT_02021853).